We begin with the raw amino-acid sequence, 106 residues long: Large ribosomal subunit protein eL42 (106 aa).

It belongs to the eukaryotic ribosomal protein eL42 family.

This is Large ribosomal subunit protein eL42 (RPL44) from Schwanniomyces occidentalis (Yeast).